Reading from the N-terminus, the 166-residue chain is NAD(P)H-quinone oxidoreductase subunit I, chloroplastic (166 aa).

2 consecutive 4Fe-4S ferredoxin-type domains span residues 55–84 (GRIH…VDWK) and 95–124 (LNYS…MTEE). Cysteine 64, cysteine 67, cysteine 70, cysteine 74, cysteine 104, cysteine 107, cysteine 110, and cysteine 114 together coordinate [4Fe-4S] cluster.

It belongs to the complex I 23 kDa subunit family. In terms of assembly, NDH is composed of at least 16 different subunits, 5 of which are encoded in the nucleus. It depends on [4Fe-4S] cluster as a cofactor.

The protein resides in the plastid. It is found in the chloroplast thylakoid membrane. It carries out the reaction a plastoquinone + NADH + (n+1) H(+)(in) = a plastoquinol + NAD(+) + n H(+)(out). The enzyme catalyses a plastoquinone + NADPH + (n+1) H(+)(in) = a plastoquinol + NADP(+) + n H(+)(out). Its function is as follows. NDH shuttles electrons from NAD(P)H:plastoquinone, via FMN and iron-sulfur (Fe-S) centers, to quinones in the photosynthetic chain and possibly in a chloroplast respiratory chain. The immediate electron acceptor for the enzyme in this species is believed to be plastoquinone. Couples the redox reaction to proton translocation, and thus conserves the redox energy in a proton gradient. The polypeptide is NAD(P)H-quinone oxidoreductase subunit I, chloroplastic (Perymeniopsis ovalifolia).